We begin with the raw amino-acid sequence, 70 residues long: MARITVDDCLEKIPNRFQLTLVAAYRARQLANGAEPLVNVHGSKDKPTVLALREIAAGKVGLEVLNRGHA.

It belongs to the RNA polymerase subunit omega family. As to quaternary structure, the RNAP catalytic core consists of 2 alpha, 1 beta, 1 beta' and 1 omega subunit. When a sigma factor is associated with the core the holoenzyme is formed, which can initiate transcription.

The catalysed reaction is RNA(n) + a ribonucleoside 5'-triphosphate = RNA(n+1) + diphosphate. In terms of biological role, promotes RNA polymerase assembly. Latches the N- and C-terminal regions of the beta' subunit thereby facilitating its interaction with the beta and alpha subunits. This is DNA-directed RNA polymerase subunit omega from Methylobacillus flagellatus (strain ATCC 51484 / DSM 6875 / VKM B-1610 / KT).